The following is a 276-amino-acid chain: Shikimate dehydrogenase (NADP(+)) (276 aa).

Shikimate is bound by residues 19–21 and threonine 66; that span reads SKS. Lysine 70 serves as the catalytic Proton acceptor. Aspartate 82 lines the NADP(+) pocket. Residues asparagine 91 and aspartate 107 each coordinate shikimate. NADP(+) contacts are provided by residues 133–137, 157–162, and leucine 222; these read GAGGA and NRTRSR. Residue tyrosine 224 coordinates shikimate. Glycine 245 serves as a coordination point for NADP(+).

It belongs to the shikimate dehydrogenase family. In terms of assembly, homodimer.

The catalysed reaction is shikimate + NADP(+) = 3-dehydroshikimate + NADPH + H(+). The protein operates within metabolic intermediate biosynthesis; chorismate biosynthesis; chorismate from D-erythrose 4-phosphate and phosphoenolpyruvate: step 4/7. Its function is as follows. Involved in the biosynthesis of the chorismate, which leads to the biosynthesis of aromatic amino acids. Catalyzes the reversible NADPH linked reduction of 3-dehydroshikimate (DHSA) to yield shikimate (SA). This chain is Shikimate dehydrogenase (NADP(+)), found in Ruegeria sp. (strain TM1040) (Silicibacter sp.).